Reading from the N-terminus, the 526-residue chain is Na(+)/H(+) antiporter NhaB (526 aa).

Transmembrane regions (helical) follow at residues 25–45, 52–72, 89–109, 130–164, 204–224, 242–262, 305–325, 350–370, 391–411, 448–468, 479–499, and 505–525; these read ILLF…AAGW, IFTL…LLAI, LVAN…IYFM, LSLA…FYAI, LMMH…VGEP, IRMA…CILV, AVIA…VGLI, QEAL…AVII, LALF…VFVG, VATP…LAPL, MALP…ELLL, and WFYQ…LPAL.

This sequence belongs to the NhaB Na(+)/H(+) (TC 2.A.34) antiporter family.

The protein resides in the cell inner membrane. The enzyme catalyses 2 Na(+)(in) + 3 H(+)(out) = 2 Na(+)(out) + 3 H(+)(in). Its function is as follows. Na(+)/H(+) antiporter that extrudes sodium in exchange for external protons. This chain is Na(+)/H(+) antiporter NhaB, found in Aeromonas salmonicida (strain A449).